Here is a 569-residue protein sequence, read N- to C-terminus: Anti-Muellerian hormone type-2 receptor (569 aa).

A signal peptide spans 1-17 (MLGTLGLWALLPAAVQA). The Extracellular portion of the chain corresponds to 18–148 (PPNRRTCVFF…AAPGESPWMA (131 aa)). Disulfide bonds link Cys-55/Cys-79 and Cys-92/Cys-109. N-linked (GlcNAc...) asparagine glycosylation is present at Asn-66. Asn-119 carries N-linked (GlcNAc...) asparagine glycosylation. A helical transmembrane segment spans residues 149–169 (LALLGLVLLLLLLLGGIVVAL). Residues 170–569 (LQRKAYRVQS…PGAACASSDV (400 aa)) are Cytoplasmic-facing. Residues 201–511 (LCFSQVIREG…RLVALVHPQE (311 aa)) form the Protein kinase domain. Residues 207–215 (IREGGHAAV) and Lys-228 contribute to the ATP site. Residue Asp-331 is the Proton acceptor of the active site. The segment at 512 to 535 (AQPCPEGRPHSHPEDWPPAPAPAP) is disordered.

This sequence belongs to the protein kinase superfamily. TKL Ser/Thr protein kinase family. TGFB receptor subfamily. Interacts with type I receptor ACVR1. It depends on Mg(2+) as a cofactor. The cofactor is Mn(2+).

It localises to the membrane. The catalysed reaction is L-threonyl-[receptor-protein] + ATP = O-phospho-L-threonyl-[receptor-protein] + ADP + H(+). The enzyme catalyses L-seryl-[receptor-protein] + ATP = O-phospho-L-seryl-[receptor-protein] + ADP + H(+). On ligand binding, forms a receptor complex consisting of two type II and two type I transmembrane serine/threonine kinases. Type II receptors phosphorylate and activate type I receptors which autophosphorylate, then bind and activate SMAD transcriptional regulators. Receptor for anti-Muellerian hormone. The polypeptide is Anti-Muellerian hormone type-2 receptor (AMHR2) (Oryctolagus cuniculus (Rabbit)).